Reading from the N-terminus, the 703-residue chain is Fatty acid oxidation complex subunit alpha (703 aa).

The segment at 1–190 (MSEQKAFSLN…KLGVVDACVP (190 aa)) is enoyl-CoA hydratase. The segment at 308 to 703 (AAVKKVGVLG…TRAGEGRTFY (396 aa)) is 3-hydroxyacyl-CoA dehydrogenase.

In the N-terminal section; belongs to the enoyl-CoA hydratase/isomerase family. It in the central section; belongs to the 3-hydroxyacyl-CoA dehydrogenase family. In terms of assembly, heterotetramer of two alpha chains (FadJ) and two beta chains (FadI).

It is found in the cytoplasm. The catalysed reaction is a (3S)-3-hydroxyacyl-CoA = a (2E)-enoyl-CoA + H2O. It catalyses the reaction a 4-saturated-(3S)-3-hydroxyacyl-CoA = a (3E)-enoyl-CoA + H2O. It carries out the reaction a (3S)-3-hydroxyacyl-CoA + NAD(+) = a 3-oxoacyl-CoA + NADH + H(+). The enzyme catalyses (3S)-3-hydroxybutanoyl-CoA = (3R)-3-hydroxybutanoyl-CoA. The protein operates within lipid metabolism; fatty acid beta-oxidation. Its function is as follows. Catalyzes the formation of a hydroxyacyl-CoA by addition of water on enoyl-CoA. Also exhibits 3-hydroxyacyl-CoA epimerase and 3-hydroxyacyl-CoA dehydrogenase activities. This is Fatty acid oxidation complex subunit alpha from Vibrio parahaemolyticus serotype O3:K6 (strain RIMD 2210633).